Here is a 212-residue protein sequence, read N- to C-terminus: Ion-translocating oxidoreductase complex subunit G (212 aa).

The helical transmembrane segment at 9–29 (GFLLALFALICTGLVAAVNQQ) threads the bilayer. Position 176 is an FMN phosphoryl threonine (threonine 176).

This sequence belongs to the RnfG family. In terms of assembly, the complex is composed of six subunits: RnfA, RnfB, RnfC, RnfD, RnfE and RnfG. FMN is required as a cofactor.

It localises to the cell inner membrane. In terms of biological role, part of a membrane-bound complex that couples electron transfer with translocation of ions across the membrane. This chain is Ion-translocating oxidoreductase complex subunit G, found in Shewanella baltica (strain OS223).